The primary structure comprises 441 residues: MEISSHQSHLLQQLNEQRRQDVFCDCSILVEGKVFKAHRNVLFASSGYFKMLLSQNSKETSQPTTATFQAFSPDTFTVILDFVYSGKLSLTGQNVIEVMSAASFLQMTDVISVCKTFIKSSLDISEKEKDRYFSLSDKDANSNGVERSSFYSGGWQEGSSSPRSHLSPEQGTGIISGKSWNKYNYHPASQKNTQQPLAKHEPRKESIKKTKHLRLSQPSEVTHYKSSKREVRTSDSSSHVSQSEEQAQIDAEMDSTPVGYQYGQGSDVTSKSFPDDLPRMRFKCPYCTHVVKRKADLKRHLRCHTGERPYPCQACGKRFSRLDHLSSHFRTIHQACKLICRKCKRHVTDLTGQVVQEGTRRYRLCNECLAEFGIDSLPIDLEAEQHLMSPSDGDKDSRWHLSEDENRSYVEIVEDGSADLVIQQVDDSEEEEEKEIKPNIR.

In terms of domain architecture, BTB spans 24–92 (CDCSILVEGK…VYSGKLSLTG (69 aa)). 2 stretches are compositionally biased toward polar residues: residues 143–170 (NGVE…SPEQ) and 178–196 (KSWN…TQQP). The tract at residues 143-251 (NGVERSSFYS…QSEEQAQIDA (109 aa)) is disordered. Phosphoserine occurs at positions 161 and 167. Residues K178, K182, K191, and K199 each participate in a glycyl lysine isopeptide (Lys-Gly) (interchain with G-Cter in SUMO2) cross-link. Positions 198–208 (AKHEPRKESIK) are enriched in basic and acidic residues. Residues 234 to 243 (SDSSSHVSQS) show a composition bias toward low complexity. 2 consecutive C2H2-type zinc fingers follow at residues 282–304 (FKCP…LRCH) and 310–333 (YPCQ…RTIH). K437 participates in a covalent cross-link: Glycyl lysine isopeptide (Lys-Gly) (interchain with G-Cter in SUMO2).

It is found in the nucleus. Functionally, may be involved in transcriptional regulation. The chain is Zinc finger and BTB domain-containing protein 8A (ZBTB8A) from Homo sapiens (Human).